The following is a 1012-amino-acid chain: F-box DNA helicase 1 (1012 aa).

Residues 1–54 (MHLTADDCEALSRSTEGLSSLTQPLNQRRSRGDVNRGLQPTHRTRTQPGAQGRQ) are disordered. Residues 12–27 (SRSTEGLSSLTQPLNQ) show a composition bias toward polar residues. The region spanning 185 to 234 (QGSIEDLPDEVLRSIFAFLPVTDLYQSLSLVCRRWRIIVGDPWFIPWKKL) is the F-box domain. Residues 427–692 (THEQQRILNH…YYLTQSFRFG (266 aa)) form the UvrD-like helicase ATP-binding domain. 448–455 (AFAGTGKT) is an ATP binding site.

It belongs to the helicase family. UvrD subfamily. In terms of assembly, part of the SCF (SKP1-CUL1-F-box) E3 ubiquitin-protein ligase complex SCF(FBH1).

The protein resides in the nucleus. The protein localises to the chromosome. The catalysed reaction is Couples ATP hydrolysis with the unwinding of duplex DNA by translocating in the 3'-5' direction.. The enzyme catalyses ATP + H2O = ADP + phosphate + H(+). The protein operates within protein modification; protein ubiquitination. Functionally, 3'-5' DNA helicase and substrate-recognition component of the SCF(FBH1) E3 ubiquitin ligase complex that plays a key role in response to stalled/damaged replication forks. Involved in genome maintenance by acting as an anti-recombinogenic helicase and preventing extensive strand exchange during homologous recombination: promotes RAD51 filament dissolution from stalled forks, thereby inhibiting homologous recombination and preventing excessive recombination. Also promotes cell death and DNA double-strand breakage in response to replication stress: promotes the endonucleolytic DNA cleavage following prolonged replication stress via its helicase activity, possibly to eliminate cells with excessive replication stress. The sequence is that of F-box DNA helicase 1 from Gallus gallus (Chicken).